The chain runs to 323 residues: Prenyl transferase (323 aa).

Positions 46, 49, and 81 each coordinate isopentenyl diphosphate. Residues Asp88 and Asp92 each coordinate Mg(2+). Residue Arg97 participates in an all-trans-polyprenyl diphosphate binding. An isopentenyl diphosphate-binding site is contributed by Arg98. An all-trans-polyprenyl diphosphate is bound by residues Lys174, Thr175, and Gln212.

The protein belongs to the FPP/GGPP synthase family. Requires Mg(2+) as cofactor.

The protein resides in the plastid. Its subcellular location is the chloroplast. Its function is as follows. Possible role in synthesis of the nonaprenyl side chain of plastoquinone or in synthesis of other prenyl chains such as undekaprenyl pyrophosphate. The sequence is that of Prenyl transferase (preA) from Cyanidium caldarium (Red alga).